A 432-amino-acid chain; its full sequence is Adenylosuccinate synthetase (432 aa).

GTP is bound by residues G12 to K18 and G40 to T42. D13 functions as the Proton acceptor in the catalytic mechanism. Mg(2+) contacts are provided by D13 and G40. Residues D13–K16, N38–H41, T130, R144, Q225, T240, and R304 contribute to the IMP site. Residue H41 is the Proton donor of the active site. Residue S300–R306 participates in substrate binding. GTP is bound by residues R306, K332–D334, and S414–G416.

This sequence belongs to the adenylosuccinate synthetase family. As to quaternary structure, homodimer. The cofactor is Mg(2+).

It localises to the cytoplasm. The catalysed reaction is IMP + L-aspartate + GTP = N(6)-(1,2-dicarboxyethyl)-AMP + GDP + phosphate + 2 H(+). The protein operates within purine metabolism; AMP biosynthesis via de novo pathway; AMP from IMP: step 1/2. Plays an important role in the de novo pathway of purine nucleotide biosynthesis. Catalyzes the first committed step in the biosynthesis of AMP from IMP. This chain is Adenylosuccinate synthetase, found in Citrifermentans bemidjiense (strain ATCC BAA-1014 / DSM 16622 / JCM 12645 / Bem) (Geobacter bemidjiensis).